A 327-amino-acid chain; its full sequence is UPF0285 protein Maeo_0978 (327 aa).

The protein belongs to the UPF0285 family.

This chain is UPF0285 protein Maeo_0978, found in Methanococcus aeolicus (strain ATCC BAA-1280 / DSM 17508 / OCM 812 / Nankai-3).